Consider the following 495-residue polypeptide: UDP-N-acetylmuramoyl-L-alanyl-D-glutamate--2,6-diaminopimelate ligase (495 aa).

Residues L28, S30, and 45–47 each bind UDP-N-acetyl-alpha-D-muramoyl-L-alanyl-D-glutamate; that span reads HRV. Position 117–123 (117–123) interacts with ATP; sequence GTNGKTT. UDP-N-acetyl-alpha-D-muramoyl-L-alanyl-D-glutamate-binding positions include N158, 159–160, S186, Q192, and R194; that span reads TT. K226 is modified (N6-carboxylysine). Meso-2,6-diaminopimelate is bound by residues R394, 418 to 421, G469, and E473; that span reads DNPR. The short motif at 418-421 is the Meso-diaminopimelate recognition motif element; it reads DNPR.

This sequence belongs to the MurCDEF family. MurE subfamily. Mg(2+) serves as cofactor. Post-translationally, carboxylation is probably crucial for Mg(2+) binding and, consequently, for the gamma-phosphate positioning of ATP.

Its subcellular location is the cytoplasm. The enzyme catalyses UDP-N-acetyl-alpha-D-muramoyl-L-alanyl-D-glutamate + meso-2,6-diaminopimelate + ATP = UDP-N-acetyl-alpha-D-muramoyl-L-alanyl-gamma-D-glutamyl-meso-2,6-diaminopimelate + ADP + phosphate + H(+). It functions in the pathway cell wall biogenesis; peptidoglycan biosynthesis. In terms of biological role, catalyzes the addition of meso-diaminopimelic acid to the nucleotide precursor UDP-N-acetylmuramoyl-L-alanyl-D-glutamate (UMAG) in the biosynthesis of bacterial cell-wall peptidoglycan. In Histophilus somni (strain 129Pt) (Haemophilus somnus), this protein is UDP-N-acetylmuramoyl-L-alanyl-D-glutamate--2,6-diaminopimelate ligase.